The following is a 292-amino-acid chain: 2-methylisocitrate lyase (292 aa).

A substrate-binding site is contributed by 44 to 46; the sequence is SGA. The Mg(2+) site is built by Asp-84 and Asp-86. Substrate-binding positions include 121–122, Arg-156, Glu-186, 208–210, Arg-239, and Arg-268; these read CG and NMT.

The protein belongs to the isocitrate lyase/PEP mutase superfamily. Methylisocitrate lyase family. Homotetramer; dimer of dimers. Requires Mg(2+) as cofactor.

The catalysed reaction is (2S,3R)-3-hydroxybutane-1,2,3-tricarboxylate = pyruvate + succinate. It participates in organic acid metabolism; propanoate degradation. Involved in the catabolism of short chain fatty acids (SCFA) via the 2-methylcitrate cycle I (propionate degradation route). Catalyzes the thermodynamically favored C-C bond cleavage of (2R,3S)-2-methylisocitrate to yield pyruvate and succinate via an alpha-carboxy-carbanion intermediate. The sequence is that of 2-methylisocitrate lyase from Shewanella oneidensis (strain ATCC 700550 / JCM 31522 / CIP 106686 / LMG 19005 / NCIMB 14063 / MR-1).